Reading from the N-terminus, the 900-residue chain is Alpha-actinin-3 (900 aa).

An N-acetylmethionine modification is found at Met1. Residues 1–26 (MMMVMQPEGLGAGEGPFSGGGGGEYM) are disordered. The tract at residues 1-260 (MMMVMQPEGL…IMTYVSCFYH (260 aa)) is actin-binding. Residues 10–24 (LGAGEGPFSGGGGGE) show a composition bias toward gly residues. Calponin-homology (CH) domains follow at residues 44-148 (KQQR…LRFA) and 157-263 (TSAK…HAFA). Spectrin repeat units lie at residues 287–397 (KLME…WLLS), 407–512 (HLAE…ALER), 522–633 (QLQL…TLQE), and 643–746 (RLRR…EVEN). 2 EF-hand domains span residues 759–794 (EQLN…MGYD) and 795–830 (LGEV…ETAE). Asp772, Asn776, Met778, Asp783, Asp808, and Asn810 together coordinate Ca(2+).

The protein belongs to the alpha-actinin family. In terms of assembly, homodimer; antiparallel. Also forms heterodimers with ACTN2. Interacts with MYOZ1. Expression restricted to skeletal muscle fast (type 2) fibers (at protein level).

Functionally, F-actin cross-linking protein which is thought to anchor actin to a variety of intracellular structures. This is a bundling protein. The polypeptide is Alpha-actinin-3 (Actn3) (Mus musculus (Mouse)).